Reading from the N-terminus, the 116-residue chain is Probable prefoldin subunit 2 (116 aa).

This sequence belongs to the prefoldin subunit beta family. Heterohexamer of two PFD-alpha type and four PFD-beta type subunits.

Functionally, binds specifically to cytosolic chaperonin (c-CPN) and transfers target proteins to it. Binds to nascent polypeptide chain and promotes folding in an environment in which there are many competing pathways for nonnative proteins. The protein is Probable prefoldin subunit 2 (pfdn2) of Dictyostelium discoideum (Social amoeba).